Here is a 754-residue protein sequence, read N- to C-terminus: Fibronectin type III domain-containing protein 1 (754 aa).

An N-terminal signal peptide occupies residues 1 to 19 (MKSWISISFLCMLFPLSNG). Disordered regions lie at residues 40 to 61 (SLQGTAPTSQYPQGGTQISQGG), 85 to 106 (AQISQGGGQGISQGATQGTQFS), and 130 to 163 (AQHSQAGAQGSQFPQSAAHTAQHHQGTAQPAQSG). The segment covering 130 to 161 (AQHSQAGAQGSQFPQSAAHTAQHHQGTAQPAQ) has biased composition (low complexity). 5 Fibronectin type-III domains span residues 250–355 (PPQS…TPDL), 359–449 (APLN…TDKF), 453–545 (APRN…TKMD), 549–642 (EPMS…LPKP), and 645–742 (LVPN…SFPG). The interval 731 to 754 (SNLSSQQFSFPGQQVGQQQSNPWI) is disordered.

In terms of tissue distribution, prismatic layer of shell (at protein level). Expressed primarily in the mantle with highest level in the outer epithelium of the mantle edge and lower level in the mantle pallium.

Its subcellular location is the secreted. The protein is Fibronectin type III domain-containing protein 1 of Margaritifera margaritifera (Freshwater pearl mussel).